The primary structure comprises 332 residues: 6-phosphogluconolactonase (332 aa).

This sequence belongs to the cycloisomerase 2 family.

The catalysed reaction is 6-phospho-D-glucono-1,5-lactone + H2O = 6-phospho-D-gluconate + H(+). The protein operates within carbohydrate degradation; pentose phosphate pathway; D-ribulose 5-phosphate from D-glucose 6-phosphate (oxidative stage): step 2/3. Catalyzes the hydrolysis of 6-phosphogluconolactone to 6-phosphogluconate. This Pectobacterium atrosepticum (strain SCRI 1043 / ATCC BAA-672) (Erwinia carotovora subsp. atroseptica) protein is 6-phosphogluconolactonase.